The primary structure comprises 391 residues: Heme A synthase (391 aa).

8 helical membrane-spanning segments follow: residues 37–57 (IRLW…VGGL), 121–141 (RQLG…FLAA), 152–172 (LLAL…MVAS), 186–206 (LATH…QALL), 229–249 (TTVL…VAGI), 298–318 (FLHR…WIFG), 332–352 (LLAM…LSAA), and 354–374 (WQVA…ILHA). Histidine 300 is a binding site for heme. Residue histidine 360 participates in heme binding.

This sequence belongs to the COX15/CtaA family. Type 2 subfamily. As to quaternary structure, interacts with CtaB. It depends on heme b as a cofactor.

It localises to the cell membrane. It catalyses the reaction Fe(II)-heme o + 2 A + H2O = Fe(II)-heme a + 2 AH2. The protein operates within porphyrin-containing compound metabolism; heme A biosynthesis; heme A from heme O: step 1/1. Functionally, catalyzes the conversion of heme O to heme A by two successive hydroxylations of the methyl group at C8. The first hydroxylation forms heme I, the second hydroxylation results in an unstable dihydroxymethyl group, which spontaneously dehydrates, resulting in the formyl group of heme A. This is Heme A synthase from Cereibacter sphaeroides (strain ATCC 17023 / DSM 158 / JCM 6121 / CCUG 31486 / LMG 2827 / NBRC 12203 / NCIMB 8253 / ATH 2.4.1.) (Rhodobacter sphaeroides).